The following is a 565-amino-acid chain: Molybdenum cofactor biosynthesis protein 1 (565 aa).

The interval 3 to 367 is molybdenum cofactor biosynthesis protein A; it reads LLARHAIRLL…AVQRKKKQHA (365 aa). The Radical SAM core domain maps to 64–276; the sequence is SFGRHHTYLR…LQIIRQRWPD (213 aa). GTP is bound at residue Arg-73. Cys-80 and Cys-84 together coordinate [4Fe-4S] cluster. Tyr-86 is a binding site for S-adenosyl-L-methionine. Residue Cys-87 participates in [4Fe-4S] cluster binding. Arg-123 contacts GTP. Gly-127 contacts S-adenosyl-L-methionine. Residue Thr-154 coordinates GTP. Residue Ser-178 coordinates S-adenosyl-L-methionine. Lys-214 contributes to the GTP binding site. Residue Met-248 participates in S-adenosyl-L-methionine binding. Residues Cys-311 and Cys-314 each coordinate [4Fe-4S] cluster. Residue 316-318 coordinates GTP; sequence RLR. Cys-328 contacts [4Fe-4S] cluster. The active-site For molybdenum cofactor biosynthesis protein C activity is the Asp-525.

In the C-terminal section; belongs to the MoaC family. This sequence in the N-terminal section; belongs to the radical SAM superfamily. MoaA family. As to quaternary structure, isoform Mocs1a and isoform Mocs1b probably form a heterooligomer. [4Fe-4S] cluster is required as a cofactor.

It catalyses the reaction GTP + AH2 + S-adenosyl-L-methionine = (8S)-3',8-cyclo-7,8-dihydroguanosine 5'-triphosphate + 5'-deoxyadenosine + L-methionine + A + H(+). The enzyme catalyses (8S)-3',8-cyclo-7,8-dihydroguanosine 5'-triphosphate = cyclic pyranopterin phosphate + diphosphate. It functions in the pathway cofactor biosynthesis; molybdopterin biosynthesis. Functionally, isoform Mocs1a and isoform Mocs1b probably form a complex that catalyzes the conversion of 5'-GTP to cyclic pyranopterin monophosphate (cPMP). Mocs1a catalyzes the cyclization of GTP to (8S)-3',8-cyclo-7,8-dihydroguanosine 5'-triphosphate and Mocs1b catalyzes the subsequent conversion of (8S)-3',8-cyclo-7,8-dihydroguanosine 5'-triphosphate to cPMP. The chain is Molybdenum cofactor biosynthesis protein 1 (Mocs1) from Drosophila melanogaster (Fruit fly).